Consider the following 455-residue polypeptide: MAPTNLTKKPSQYKQSSRKGKKAWRKNIDLSDVEQYMEKKIDHEITHGTSDITSLQNDALFHVDVEGDEILKNKLIKRKQIKKVLKSKEILDAVKTNSKIAALNHHKNSSGNPNKIQGVSKHELKKLMALAGRVHGESKIKNRVAKDGLVKTTAGDLWGEESNSKKQKVKLPSGIKLDVEKKDQIPEELLKKSTTSWSTASVRPSTLDIEPIAVKEFTEIPHAGKSYNPNNKAWSELINKEYKEEKAREDERIALEKYKERIRHLMETLDDNEEEESSSNEEEEEEEEENENENESTQCSGSDKEIKLSINKPVKNKKKTKYQRNKAKRHEEKVKLQQELKELRQRVKDLEEVINSEETEILSAIESDSNKVKKSKKNKKHKLGTKYSVIDERLEIKFSDELSDSLRKLKPEGNLLYDTVRKLQSSGKVETRVPVRKGRKYKQKITEKWTHKDFK.

Over residues 1–15 (MAPTNLTKKPSQYKQ) the composition is skewed to polar residues. A disordered region spans residues 1–25 (MAPTNLTKKPSQYKQSSRKGKKAWR). Residues 16–25 (SSRKGKKAWR) are compositionally biased toward basic residues. Phosphoserine is present on serine 31. A disordered region spans residues 264 to 333 (HLMETLDDNE…RNKAKRHEEK (70 aa)). Positions 268–294 (TLDDNEEEESSSNEEEEEEEEENENEN) are enriched in acidic residues. Residues 314-328 (VKNKKKTKYQRNKAK) show a composition bias toward basic residues.

This sequence belongs to the NOP53 family. Interacts with CBF5, FPR3, FPR4, NOP2, PIH1, RRN3, RRP6 and PAP2. Interacts with pre-60S ribosomal particles.

It is found in the nucleus. The protein resides in the nucleolus. It localises to the nucleoplasm. Functionally, late-acting factor in the nuclear maturation of 60S ribosomal subunits, which is required for normal acquisition of export competence. Required for the export of the large subunit. Acts to stimulate the RNase activity of the exosome complex, and may recruit the exosome to 7S pre-rRNA for processing. Associates with numerous RNAs including the 27S and 7S pre-rRNAs and the box H/ACA snoRNA snR37. Also interacts (via N-terminal region) with the mature 25S rRNA and the mature 5.8S rRNA. The polypeptide is Ribosome biogenesis protein NOP53 (Saccharomyces cerevisiae (strain ATCC 204508 / S288c) (Baker's yeast)).